Reading from the N-terminus, the 101-residue chain is Small ribosomal subunit protein uS14A (101 aa).

The tract at residues 31–73 is disordered; that stretch reads IKSPSTTPEARVAAQSELNRQPRDASPVRVRNRDSVDGRPRGH. A compositionally biased stretch (basic and acidic residues) spans 61-70; that stretch reads RNRDSVDGRP.

This sequence belongs to the universal ribosomal protein uS14 family. Part of the 30S ribosomal subunit. Contacts proteins S3 and S10.

Its function is as follows. Binds 16S rRNA, required for the assembly of 30S particles and may also be responsible for determining the conformation of the 16S rRNA at the A site. This chain is Small ribosomal subunit protein uS14A, found in Mycolicibacterium vanbaalenii (strain DSM 7251 / JCM 13017 / BCRC 16820 / KCTC 9966 / NRRL B-24157 / PYR-1) (Mycobacterium vanbaalenii).